The chain runs to 737 residues: Palmitoyltransferase AKR1 (737 aa).

Positions 1 to 47 are disordered; that stretch reads MKQIDSEDSITVPNDTPEDNSASSMQPVMSNLSIEEHQSENEPIEQE. Residues 1-304 are Cytoplasmic-facing; that stretch reads MKQIDSEDSI…VYFKKSLHTK (304 aa). Polar residues predominate over residues 9–33; that stretch reads SITVPNDTPEDNSASSMQPVMSNLS. ANK repeat units follow at residues 54–84, 90–119, 124–153, 157–190, 194–223, and 227–256; these read PLLS…DLKH, ERVS…DVNF, LNAT…DPSV, QGFN…DIDC, NGRT…SVKA, and GGFT…DFFQ. 2 helical membrane passes run 305 to 325 and 326 to 346; these read LVTF…FASI and HPIF…YTLK. At 347-364 the chain is on the cytoplasmic side; it reads KYVIPAYAQRNTRQSFLK. The chain crosses the membrane as a helical span at residues 365–385; that stretch reads TPFLAGVFSGSVFWASYTWLT. Residues 386-396 lie on the Lumenal side of the membrane; the sequence is RIMPLTLIEEP. A helical membrane pass occupies residues 397–417; sequence ITNLLFFAGVVLLASLFVKLV. At 418 to 493 the chain is on the cytoplasmic side; that stretch reads RSDPGLIPEE…YNDIGLRNHK (76 aa). The DHHC domain maps to 450–500; that stretch reads HFCISTWVRKPIRSKFSNFSRALVTRFDHFCPWIYNDIGLRNHKTFLFFIL. Cys480 (S-palmitoyl cysteine intermediate) is an active-site residue. The helical transmembrane segment at 494–514 threads the bilayer; it reads TFLFFILCLETCIFVFLKLCM. The Lumenal segment spans residues 515–547; it reads EYFDVLEDTFEDDYDLNCGIFGEDLCAGFFFDT. The chain crosses the membrane as a helical span at residues 548 to 568; it reads FTFLVLAWTCFQGIWVGFLTF. At 569–737 the chain is on the cytoplasmic side; sequence VQLFQTAKGV…ERHYLAEEIV (169 aa).

The protein belongs to the DHHC palmitoyltransferase family. AKR/ZDHHC17 subfamily.

It is found in the early endosome membrane. The protein localises to the golgi apparatus membrane. The enzyme catalyses L-cysteinyl-[protein] + hexadecanoyl-CoA = S-hexadecanoyl-L-cysteinyl-[protein] + CoA. Functionally, palmitoyltransferase specific for casein kinase 1. The sequence is that of Palmitoyltransferase AKR1 (AKR1) from Lachancea kluyveri (strain ATCC 58438 / CBS 3082 / BCRC 21498 / NBRC 1685 / JCM 7257 / NCYC 543 / NRRL Y-12651) (Yeast).